The primary structure comprises 311 residues: Eukaryotic translation initiation factor 3 subunit E (311 aa).

The PCI domain occupies 100–280 (VYYNYPKGRD…MGVKSVSIHE (181 aa)).

The protein belongs to the eIF-3 subunit E family. In terms of assembly, component of the eukaryotic translation initiation factor 3 (eIF-3) complex.

The protein localises to the cytoplasm. Component of the eukaryotic translation initiation factor 3 (eIF-3) complex, which is involved in protein synthesis of a specialized repertoire of mRNAs and, together with other initiation factors, stimulates binding of mRNA and methionyl-tRNAi to the 40S ribosome. The eIF-3 complex specifically targets and initiates translation of a subset of mRNAs involved in cell proliferation. This chain is Eukaryotic translation initiation factor 3 subunit E, found in Caenorhabditis briggsae.